We begin with the raw amino-acid sequence, 260 residues long: 33 kDa inner dynein arm light chain, axonemal (260 aa).

The disordered stretch occupies residues 1-66 (MIPPNASLVK…PVESQKAQQT (66 aa)). Residues 177 to 260 (MRKALQAEQG…LEGIIAPNKK (84 aa)) adopt a coiled-coil conformation.

Belongs to the inner dynein arm light chain family. Post-translationally, may undergo some post-translational modifications that shift its mobility on SDS gels.

In terms of biological role, may play a dynamic role in flagellar motility. The polypeptide is 33 kDa inner dynein arm light chain, axonemal (Strongylocentrotus purpuratus (Purple sea urchin)).